A 681-amino-acid polypeptide reads, in one-letter code: Hydroxyproline O-galactosyltransferase GALT6 (681 aa).

Residues 1–28 (MRKPKLSKLERLEKFDIFVSLSKQRSVQ) are Cytoplasmic-facing. Residues 29 to 49 (ILMAVGLLYMLLITFEIPFVF) traverse the membrane as a helical; Signal-anchor for type II membrane protein segment. At 50–681 (KTGLSSLSQD…TGKPQCCNMR (632 aa)) the chain is on the lumenal side. The segment at 57 to 80 (SQDPLTRPEKHNSQRELQERRAPT) is disordered. Over residues 62–78 (TRPEKHNSQRELQERRA) the composition is skewed to basic and acidic residues. The Galectin domain occupies 187–401 (NIMELPCGLT…DIDVHSVFAG (215 aa)). N-linked (GlcNAc...) asparagine glycosylation is present at Asn629.

The protein belongs to the glycosyltransferase 31 family. The cofactor is Mn(2+). As to expression, expressed in junveile leaves and stems, and at lower levels in cauline leaves and siliques.

It is found in the golgi apparatus membrane. It functions in the pathway protein modification; protein glycosylation. Possesses hydroxyproline O-galactosyltransferase activity. Transfers galactose from UDP-galactose to hydroxyproline residues in the arabinogalactan proteins (AGPs). Is specific for AGPs containing non-contiguous peptidyl hydroxyproline residues. Utilizes UDP-galactose solely as sugar donor. The addition of galactose onto the peptidyl hydroxyproline residues in AGP core proteins represents the first committed step in arabinogalactan polysaccharide addition. AGP glycans play essential roles in both vegetative and reproductive plant growth. The sequence is that of Hydroxyproline O-galactosyltransferase GALT6 from Arabidopsis thaliana (Mouse-ear cress).